The primary structure comprises 431 residues: Protein PIN-LIKES 6 (431 aa).

The Lumenal segment spans residues 1 to 29 (MIARILAALADSMEMPVAAGGGSVLGTIK). Residues 30-50 (IAVMPIAKVFTMCFLGLLMAS) traverse the membrane as a helical segment. Topologically, residues 51 to 66 (KYVNILPPSGRKLLNG) are cytoplasmic. A helical membrane pass occupies residues 67–87 (LVFSLLLPCLIFSQLGQAVTL). The Lumenal segment spans residues 88 to 93 (QKMLQW). Residues 94 to 114 (WFIPVNVVLGTISGSIIGFIV) form a helical membrane-spanning segment. Over 115–128 (ASIVRPPYPYFKFT) the chain is Cytoplasmic. A helical membrane pass occupies residues 129–149 (IIQIGVGNIGNVPLVLLAALC). The Lumenal segment spans residues 150-169 (RDTSNPFGDSEKCSIDGTAY). A helical membrane pass occupies residues 170–190 (ISFGQWVGAIILYTYVYQMFA). The Cytoplasmic segment spans residues 191–268 (PPPEGFDAEE…FLYEKLKLKQ (78 aa)). A helical transmembrane segment spans residues 269 to 289 (IVQPAIVASILAMILGAIPFT). Over 290 to 306 (KKLIFTNGAPLFFFTDS) the chain is Lumenal. A helical membrane pass occupies residues 307-327 (CMILGDAMIPCILLALGGNLI). Topologically, residues 328-340 (NGPGSSKLGFKTT) are cytoplasmic. Residues 341-361 (AAIIIGRLVLVPPVGLGIVTV) traverse the membrane as a helical segment. Topologically, residues 362–376 (ADKLGFLPADDKMFR) are lumenal. The helical transmembrane segment at 377–397 (FVLLLQHTMPTSVLSGAVANL) threads the bilayer. At 398–406 (RGCGRESAA) the chain is on the cytoplasmic side. A helical membrane pass occupies residues 407 to 427 (VLFWVHIFAIFSMAGWMVLYI). At 428–431 (NILF) the chain is on the lumenal side.

Belongs to the auxin efflux carrier (TC 2.A.69.2) family. As to expression, expressed in seedlings, rosette and cauline leaves, stems and flowers.

Its subcellular location is the endoplasmic reticulum membrane. Functionally, involved in cellular auxin homeostasis by regulating auxin metabolism. Regulates intracellular auxin accumulation at the endoplasmic reticulum and thus auxin availability for nuclear auxin signaling. This Arabidopsis thaliana (Mouse-ear cress) protein is Protein PIN-LIKES 6.